The chain runs to 137 residues: LLKPNMVTPGHSCPTKYSPEEIAMATVTALRRTVPPAVPGVTFLSGGQSEEEASINLNAINTCPLVRPWALTFSYGRALQASALSAWRGQRDNANAATEEFVKRAEVNGLAALGKYEGSGDDSGAAGQSLYVANHAY.

The Schiff-base intermediate with dihydroxyacetone-P role is filled by Lys-3.

This sequence belongs to the class I fructose-bisphosphate aldolase family. As to quaternary structure, homotetramer.

It catalyses the reaction beta-D-fructose 1,6-bisphosphate = D-glyceraldehyde 3-phosphate + dihydroxyacetone phosphate. It functions in the pathway carbohydrate degradation; glycolysis; D-glyceraldehyde 3-phosphate and glycerone phosphate from D-glucose: step 4/4. The sequence is that of Fructose-bisphosphate aldolase C (ALDOC) from Gallus gallus (Chicken).